Consider the following 326-residue polypeptide: ATP-dependent 6-phosphofructokinase 2 (326 aa).

Gly-14 contributes to the ATP binding site. Residue 24-28 (RAVTR) participates in ADP binding. ATP-binding positions include 75-76 (RC) and 105-108 (GDGS). Asp-106 serves as a coordination point for Mg(2+). Position 129–131 (129–131 (TID)) interacts with substrate. Catalysis depends on Asp-131, which acts as the Proton acceptor. An ADP-binding site is contributed by Arg-158. Substrate contacts are provided by residues Arg-166 and 173-175 (MGR). ADP contacts are provided by residues 189 to 191 (GAE), Lys-215, and 217 to 219 (KNS). Substrate is bound by residues Glu-226, Arg-250, and 256–259 (HLQR).

This sequence belongs to the phosphofructokinase type A (PFKA) family. ATP-dependent PFK group I subfamily. Prokaryotic clade 'B1' sub-subfamily. Homotetramer. The cofactor is Mg(2+).

Its subcellular location is the cytoplasm. It carries out the reaction beta-D-fructose 6-phosphate + ATP = beta-D-fructose 1,6-bisphosphate + ADP + H(+). The protein operates within carbohydrate degradation; glycolysis; D-glyceraldehyde 3-phosphate and glycerone phosphate from D-glucose: step 3/4. With respect to regulation, allosterically activated by ADP and other diphosphonucleosides, and allosterically inhibited by phosphoenolpyruvate. Catalyzes the phosphorylation of D-fructose 6-phosphate to fructose 1,6-bisphosphate by ATP, the first committing step of glycolysis. The polypeptide is ATP-dependent 6-phosphofructokinase 2 (Bacteroides thetaiotaomicron (strain ATCC 29148 / DSM 2079 / JCM 5827 / CCUG 10774 / NCTC 10582 / VPI-5482 / E50)).